The sequence spans 515 residues: RNA-binding region-containing protein 3 (515 aa).

A disordered region spans residues 1-26 (MAVPEPSMPLSRGGPGSASLSPPRGD). Residue S21 is modified to Phosphoserine. The region spanning 27–102 (RTLLVRHLPA…HTLVVEFAKE (76 aa)) is the RRM 1 domain. 3 disordered regions span residues 107 to 133 (HSSC…EKKE), 215 to 254 (LHAP…EEDR), and 337 to 369 (ETEQ…PKPN). A Phosphoserine modification is found at S108. Residues 115–133 (AEKKKRLDDTVENDKEKKE) are compositionally biased toward basic and acidic residues. Residues 218 to 230 (PLPPTSPQPPEEP) are compositionally biased toward pro residues. The span at 337 to 348 (ETEQNNEEKNSD) shows a compositional bias: basic and acidic residues. A Phosphoserine modification is found at S349. The 84-residue stretch at 419–502 (CRIYVKNLAR…KPMVVQFARS (84 aa)) folds into the RRM 2 domain.

Component of the U11/U12 snRNPs that are part of the U12-type spliceosome. Found in a complex with m(7)G-capped U12 snRNA. Interacts with PDCD7.

It is found in the nucleus. Participates in pre-mRNA U12-dependent splicing, performed by the minor spliceosome which removes U12-type introns. U12-type introns comprises less than 1% of all non-coding sequences. Binds to the 3'-stem-loop of m(7)G-capped U12 snRNA. In Rattus norvegicus (Rat), this protein is RNA-binding region-containing protein 3 (Rnpc3).